The primary structure comprises 176 residues: ATP synthase subunit b (176 aa).

Residues 26 to 45 (VINLAIIIGVLVYFGRGLLG) form a helical membrane-spanning segment.

Belongs to the ATPase B chain family. As to quaternary structure, F-type ATPases have 2 components, F(1) - the catalytic core - and F(0) - the membrane proton channel. F(1) has five subunits: alpha(3), beta(3), gamma(1), delta(1), epsilon(1). F(0) has four main subunits: a(1), b(1), b'(1) and c(10-14). The alpha and beta chains form an alternating ring which encloses part of the gamma chain. F(1) is attached to F(0) by a central stalk formed by the gamma and epsilon chains, while a peripheral stalk is formed by the delta, b and b' chains.

Its subcellular location is the cellular thylakoid membrane. F(1)F(0) ATP synthase produces ATP from ADP in the presence of a proton or sodium gradient. F-type ATPases consist of two structural domains, F(1) containing the extramembraneous catalytic core and F(0) containing the membrane proton channel, linked together by a central stalk and a peripheral stalk. During catalysis, ATP synthesis in the catalytic domain of F(1) is coupled via a rotary mechanism of the central stalk subunits to proton translocation. In terms of biological role, component of the F(0) channel, it forms part of the peripheral stalk, linking F(1) to F(0). The protein is ATP synthase subunit b of Synechococcus sp. (strain PCC 6716).